We begin with the raw amino-acid sequence, 490 residues long: Glutamate--tRNA ligase (490 aa).

Positions 13–23 match the 'HIGH' region motif; it reads PSPTGTPHVGL. A 'KMSKS' region motif is present at residues 257–261; the sequence is KLSKR. Residue lysine 260 coordinates ATP.

Belongs to the class-I aminoacyl-tRNA synthetase family. Glutamate--tRNA ligase type 1 subfamily. As to quaternary structure, monomer.

It localises to the cytoplasm. The catalysed reaction is tRNA(Glu) + L-glutamate + ATP = L-glutamyl-tRNA(Glu) + AMP + diphosphate. Functionally, catalyzes the attachment of glutamate to tRNA(Glu) in a two-step reaction: glutamate is first activated by ATP to form Glu-AMP and then transferred to the acceptor end of tRNA(Glu). This Mycobacterium bovis (strain BCG / Pasteur 1173P2) protein is Glutamate--tRNA ligase.